Consider the following 375-residue polypeptide: Pulmonary surfactant-associated protein D (375 aa).

Residues 1–20 (MLLFLLSALVLLTQPLGYLE) form the signal peptide. S-nitrosocysteine occurs at positions 35 and 40. A disordered region spans residues 45–221 (SGLPGRDGRD…DKGAKGESGL (177 aa)). One can recognise a Collagen-like domain in the interval 46 to 222 (GLPGRDGRDG…KGAKGESGLP (177 aa)). A compositionally biased stretch (basic and acidic residues) spans 50–65 (RDGRDGREGPRGEKGD). Positions 66–86 (PGLPGAAGQAGMPGQAGPVGP) are enriched in low complexity. P78 is subject to 4-hydroxyproline. The residue at position 87 (K87) is a 5-hydroxylysine. N-linked (GlcNAc...) asparagine glycosylation occurs at N90. Residue P96 is modified to 4-hydroxyproline. Position 99 is a 5-hydroxylysine (K99). A compositionally biased stretch (pro residues) spans 105–114 (SGPPGPPGVP). 2 stretches are compositionally biased toward low complexity: residues 116–132 (PAGR…IGPQ) and 138–150 (KGEA…VGAP). Residues P171 and P177 each carry the 4-hydroxyproline modification. Residues 204–216 (KGDKGIPGDKGAK) show a composition bias toward basic and acidic residues. Residues 223 to 252 (DVASLRQQVEALQGQVQHLQAAFSQYKKVE) adopt a coiled-coil conformation. One can recognise a C-type lectin domain in the interval 260–375 (VGEKIFKTAG…GEKRLVVCEF (116 aa)). 2 disulfide bridges follow: C281–C373 and C351–C365.

This sequence belongs to the SFTPD family. Oligomeric complex of 4 set of homotrimers. The N-terminus is blocked. Post-translationally, hydroxylation on proline residues within the sequence motif, GXPG, is most likely to be 4-hydroxy as this fits the requirement for 4-hydroxylation in vertebrates. In terms of processing, S-nitrosylation at Cys-35 and Cys-40 alters the quaternary structure which results in a pro-inflammatory chemoattractive signaling activity with macrophages. Expressed in lung, brain, pancreas and adipose tissue (mainly mature adipocytes).

It localises to the secreted. The protein localises to the extracellular space. The protein resides in the extracellular matrix. Its subcellular location is the surface film. Contributes to the lung's defense against inhaled microorganisms, organic antigens and toxins. Interacts with compounds such as bacterial lipopolysaccharides, oligosaccharides and fatty acids and modulates leukocyte action in immune response. May participate in the extracellular reorganization or turnover of pulmonary surfactant. Binds strongly maltose residues and to a lesser extent other alpha-glucosyl moieties. This is Pulmonary surfactant-associated protein D (SFTPD) from Homo sapiens (Human).